We begin with the raw amino-acid sequence, 1385 residues long: Serine-aspartate repeat-containing protein D (1385 aa).

The signal sequence occupies residues 1-35 (MLNRENKTAITRKGMVSNRLNKFSIRKYTVGTASI). Residues 23–34 (FSIRKYTVGTAS) carry the YSIRK-G/S signaling motif motif. The interval 36-568 (LVGTTLIFGL…NNQSGGAGQE (533 aa)) is ligand binding A region. Disordered stretches follow at residues 54 to 162 (ESTN…DLLE) and 200 to 224 (ETLVDNNSNSNNENNADIILPKSTA). Polar residues-rich tracts occupy residues 62–71 (EATTSASDNQ) and 94–109 (EMVSSQGNETTSNGNK). Residues 130–145 (KSDEQASPKSTNEDLN) are compositionally biased toward basic and acidic residues. A compositionally biased stretch (polar residues) spans 146-155 (TKQTISNQEG). Residues 205–214 (NNSNSNNENN) show a composition bias toward low complexity. CNA-B domains lie at 569-680 (VYKI…IYKP), 681-791 (KYNL…YKTP), 792-901 (KYNL…FYKP), 902-1012 (TYNL…YKTP), and 1013-1123 (KYSL…EEET). 3 disordered regions span residues 856-886 (FETPSGYTPTQVGSGTDEGIDSNGTSTTGVI), 972-992 (YTPTSVTSGNDTEKDSNGLTT), and 1077-1361 (FEKP…SNNA). Composition is skewed to polar residues over residues 860–869 (SGYTPTQVGS) and 972–981 (YTPTSVTSGN). Residues 1081–1090 (TGLTQTGTNT) are compositionally biased toward low complexity. Composition is skewed to acidic residues over residues 1091–1101 (TEDDKDADGGE) and 1118–1324 (YYEE…DSDS). Residues 1348 to 1352 (LPETG) carry the LPXTG sorting signal motif. Position 1351 is a pentaglycyl murein peptidoglycan amidated threonine (Thr1351). Positions 1352–1385 (GNENSGSNNATLFGGLFAALGSLLLFGRRKKQNK) are cleaved as a propeptide — removed by sortase.

This sequence belongs to the serine-aspartate repeat-containing protein (SDr) family. In terms of assembly, interacts with host DSG1; this interaction increases S.aureus adherence to keratinocytes.

The protein resides in the secreted. It is found in the cell wall. Its function is as follows. Cell surface-associated calcium-binding protein which plays an important role in adhesion and pathogenesis. Mediates interactions with components of the extracellular matrix such as host DSG1 to promote bacterial adhesion to host cells. Contributes to the resistance to killing by innate immune components such as neutrophils present in blood and thus attenuates bacterial clearance. In Staphylococcus aureus (strain Mu50 / ATCC 700699), this protein is Serine-aspartate repeat-containing protein D (sdrD).